Consider the following 202-residue polypeptide: Snake venom metalloproteinase Ac1 (202 aa).

Positions 6–202 (RYMEIVIVVD…ENPPCILNKP (197 aa)) constitute a Peptidase M12B domain. Positions 9 and 93 each coordinate Ca(2+). Intrachain disulfides connect C117–C197 and C157–C181. H142 provides a ligand contact to Zn(2+). Residue E143 is part of the active site. Zn(2+) contacts are provided by H146 and H152. Ca(2+) contacts are provided by C197 and N200.

This sequence belongs to the venom metalloproteinase (M12B) family. P-I subfamily. Monomer. Zn(2+) serves as cofactor. In terms of tissue distribution, expressed by the venom gland.

The protein localises to the secreted. Its function is as follows. Snake venom metalloproteinase that impairs hemostasis in the envenomed animal. This Deinagkistrodon acutus (Hundred-pace snake) protein is Snake venom metalloproteinase Ac1.